The sequence spans 606 residues: Probable potassium transport system protein Kup 2 (606 aa).

The next 12 helical transmembrane spans lie at 18–38 (GLVF…IMTL), 46–66 (VLGI…VEYA), 97–117 (VAFV…DGII), 140–160 (AQGV…IFQF), 169–189 (AFGP…IVSI), 204–224 (AVTF…EVIL), 247–267 (AWYF…AFIL), 286–306 (ILYI…SQAL), 339–359 (IYIG…MLIF), 368–388 (AYGL…TMIF), 395–415 (WKVP…TANF), and 418–438 (LPHG…IMII).

Belongs to the HAK/KUP transporter (TC 2.A.72) family.

The protein localises to the cell inner membrane. The enzyme catalyses K(+)(in) + H(+)(in) = K(+)(out) + H(+)(out). In terms of biological role, transport of potassium into the cell. Likely operates as a K(+):H(+) symporter. The sequence is that of Probable potassium transport system protein Kup 2 from Geobacter metallireducens (strain ATCC 53774 / DSM 7210 / GS-15).